A 66-amino-acid chain; its full sequence is Translational regulator CsrA (66 aa).

Belongs to the CsrA/RsmA family. Homodimer; the beta-strands of each monomer intercalate to form a hydrophobic core, while the alpha-helices form wings that extend away from the core.

The protein resides in the cytoplasm. In terms of biological role, a key translational regulator that binds mRNA to regulate translation initiation and/or mRNA stability. Mediates global changes in gene expression, shifting from rapid growth to stress survival by linking envelope stress, the stringent response and the catabolite repression systems. Usually binds in the 5'-UTR; binding at or near the Shine-Dalgarno sequence prevents ribosome-binding, repressing translation, binding elsewhere in the 5'-UTR can activate translation and/or stabilize the mRNA. Its function is antagonized by small RNA(s). The sequence is that of Translational regulator CsrA from Alkalilimnicola ehrlichii (strain ATCC BAA-1101 / DSM 17681 / MLHE-1).